The following is a 303-amino-acid chain: Paired immunoglobulin-like type 2 receptor alpha (303 aa).

Residues 1-19 form the signal peptide; sequence MGRPLLLPLLPLLLPPAFL. Topologically, residues 20 to 197 are extracellular; it reads QPSGSTGSGP…DSWHISLETA (178 aa). The 119-residue stretch at 32–150 folds into the Ig-like V-type domain; sequence LYGVTQPKHL…SIEGTKLSIT (119 aa). Asparagine 100 carries an N-linked (GlcNAc...) asparagine glycan. The helical transmembrane segment at 198–218 threads the bilayer; sequence VGVAVAVTVLGIMILGLICLL. The Cytoplasmic segment spans residues 219 to 303; it reads RWRRRKGQQR…NETLYSVLKA (85 aa). Positions 226-296 are disordered; the sequence is QQRTKATTPA…RPLKSPQNET (71 aa). 2 short sequence motifs (ITIM motif) span residues 267-272 and 296-301; these read IVYASL and TLYSVL.

As to quaternary structure, monomer. Interacts with PTPN6/SHP-1 and PTPN11/SHP-2 upon tyrosine phosphorylation. (Microbial infection) Interacts with herpes simplex virus 1 glycoprotein B. Post-translationally, according to PubMed:10660620, N- and O-glycosylated. According to PubMed:10903717, only N-glycosylated. In terms of processing, phosphorylated on tyrosine residues. Predominantly detected in hemopoietic tissues and is expressed by monocytes, macrophages, and granulocytes, but not by lymphocytes. Also strongly expressed by dendritic cells (DC); preferentially by CD14+/CD1a- DC derived from CD34+ progenitors. Also expressed by CD11c+ blood and tonsil DC, but not by CD11c- DC precursors.

It localises to the cell membrane. The protein localises to the secreted. Paired receptors consist of highly related activating and inhibitory receptors and are widely involved in the regulation of the immune system. PILRA is thought to act as a cellular signaling inhibitory receptor by recruiting cytoplasmic phosphatases like PTPN6/SHP-1 and PTPN11/SHP-2 via their SH2 domains that block signal transduction through dephosphorylation of signaling molecules. Receptor for PIANP. Its function is as follows. (Microbial infection) Acts as an entry co-receptor for herpes simplex virus 1. The protein is Paired immunoglobulin-like type 2 receptor alpha (PILRA) of Homo sapiens (Human).